Reading from the N-terminus, the 460-residue chain is Transcription factor TGA10 (460 aa).

The span at 1–11 shows a compositional bias: basic residues; the sequence is MQGHHQNHHQH. 2 disordered regions span residues 1–29 and 43–163; these read MQGH…NKDG and LDGQ…PKTL. Residues 12 to 21 show a composition bias toward low complexity; the sequence is LSSSSATSSH. Polar residues-rich tracts occupy residues 65–81 and 121–136; these read TQNL…NIFP and DLTN…QGSK. Basic and acidic residues predominate over residues 138–162; it reads IKKEGNRKGLASSDHDIPKSSDPKT. The bZIP domain maps to 159–203; the sequence is DPKTLRRLAQNREAARKSRLRKKAYVQQLESCRIKLTQLEQEIQR. The interval 161 to 181 is basic motif; it reads KTLRRLAQNREAARKSRLRKK. The Nuclear localization signal signature appears at 163–170; the sequence is LRRLAQNR. The tract at residues 187–201 is leucine-zipper; it reads LESCRIKLTQLEQEI. Residues 236–455 form the DOG1 domain; sequence AAVFDMEYAR…QALSSLWLAR (220 aa).

Belongs to the bZIP family. In terms of assembly, homodimer. Binds DNA as a dimer. Interacts with floral glutaredoxins GRXC7/ROXY1 and GRXC8/ROXY2 in the nucleus. Interacts with TGA1, TGA2, TGA3, TGA4, TGA5, TGA6, TGA7, TGA9 and PAN. In terms of tissue distribution, expressed at low levels in inflorescence apex and flowers.

It is found in the nucleus. Its function is as follows. Together with TGA9, basic leucine-zipper transcription factor required for anther development, probably via the activation of SPL expression in anthers and via the regulation of genes with functions in early and middle tapetal development. Required for signaling responses to pathogen-associated molecular patterns (PAMPs) such as flg22 that involves chloroplastic reactive oxygen species (ROS) production and subsequent expression of H(2)O(2)-responsive genes. This Arabidopsis thaliana (Mouse-ear cress) protein is Transcription factor TGA10.